Here is a 142-residue protein sequence, read N- to C-terminus: ER-derived vesicles protein ERV15 (142 aa).

The Cytoplasmic segment spans residues 1–7; the sequence is MSGTGLS. Residues 8–28 form a helical membrane-spanning segment; that stretch reads LFVTGLILNCLNSICQIYFTI. Topologically, residues 29-55 are extracellular; it reads LYGDLEADYINSIELCKRVNRLSVPEA. The chain crosses the membrane as a helical span at residues 56–76; sequence ILQAFISALFLFNGYWFVFLL. The Cytoplasmic portion of the chain corresponds to 77–114; the sequence is NVPVLAYNASKVYKKTHLLDATDIFRKLGRCKIECFLK. A helical transmembrane segment spans residues 115–135; sequence LGFYLLIFFFYFYRMVTALLE. The Extracellular portion of the chain corresponds to 136-142; it reads NDANLIS.

This sequence belongs to the cornichon family.

Its subcellular location is the membrane. The polypeptide is ER-derived vesicles protein ERV15 (ERV15) (Saccharomyces cerevisiae (strain ATCC 204508 / S288c) (Baker's yeast)).